Consider the following 143-residue polypeptide: Large ribosomal subunit protein uL11 (143 aa).

The protein belongs to the universal ribosomal protein uL11 family. In terms of assembly, part of the ribosomal stalk of the 50S ribosomal subunit. Interacts with L10 and the large rRNA to form the base of the stalk. L10 forms an elongated spine to which L12 dimers bind in a sequential fashion forming a multimeric L10(L12)X complex. One or more lysine residues are methylated.

In terms of biological role, forms part of the ribosomal stalk which helps the ribosome interact with GTP-bound translation factors. This chain is Large ribosomal subunit protein uL11, found in Beutenbergia cavernae (strain ATCC BAA-8 / DSM 12333 / CCUG 43141 / JCM 11478 / NBRC 16432 / NCIMB 13614 / HKI 0122).